The chain runs to 109 residues: Class I hydrophobin 7 (109 aa).

A signal peptide spans 1 to 17; sequence MFAQSFIITALAALAVA. 4 cysteine pairs are disulfide-bonded: cysteine 28-cysteine 88, cysteine 35-cysteine 82, cysteine 36-cysteine 69, and cysteine 89-cysteine 102.

The protein belongs to the fungal hydrophobin family. In terms of assembly, self-assembles to form functional amyloid fibrils called rodlets. Self-assembly into fibrillar rodlets occurs spontaneously at hydrophobic:hydrophilic interfaces and the rodlets further associate laterally to form amphipathic monolayers.

The protein localises to the secreted. The protein resides in the cell wall. Its function is as follows. Aerial growth, conidiation, and dispersal of filamentous fungi in the environment rely upon a capability of their secreting small amphipathic proteins called hydrophobins (HPBs) with low sequence identity. Class I can self-assemble into an outermost layer of rodlet bundles on aerial cell surfaces, conferring cellular hydrophobicity that supports fungal growth, development and dispersal; whereas Class II form highly ordered films at water-air interfaces through intermolecular interactions but contribute nothing to the rodlet structure. Hydph7 is a class I hydrophobin involved in fruiting body development. The protein is Class I hydrophobin 7 of Pleurotus ostreatus (strain PC15) (Oyster mushroom).